We begin with the raw amino-acid sequence, 147 residues long: Large ribosomal subunit protein uL15 (147 aa).

The interval 1–58 (MKLHELKPAQGSTKAPKRLGRGIGSGTGKTSGKGHKGQKARAGGGVRPGFEGGQQPLA) is disordered. Gly residues-rich tracts occupy residues 21 to 31 (RGIGSGTGKTS) and 42 to 52 (AGGGVRPGFEG).

It belongs to the universal ribosomal protein uL15 family. In terms of assembly, part of the 50S ribosomal subunit.

Binds to the 23S rRNA. The sequence is that of Large ribosomal subunit protein uL15 from Desulfitobacterium hafniense (strain Y51).